We begin with the raw amino-acid sequence, 400 residues long: 3-phenylpropionate/cinnamic acid dioxygenase ferredoxin--NAD(+) reductase component (400 aa).

5 to 36 lines the FAD pocket; the sequence is TIIIVGGGQAAAMAAASLRQQGFTGELHLFSD. 146 to 174 serves as a coordination point for NAD(+); it reads SVVIVGAGTIGLELAASATQRGCKVTVIE.

Belongs to the bacterial ring-hydroxylating dioxygenase ferredoxin reductase family. This dioxygenase system consists of four proteins: the two subunits of the hydroxylase component (HcaE and HcaF), a ferredoxin (HcaC) and a ferredoxin reductase (HcaD). FAD serves as cofactor.

It carries out the reaction 2 reduced [2Fe-2S]-[ferredoxin] + NAD(+) + H(+) = 2 oxidized [2Fe-2S]-[ferredoxin] + NADH. Its pathway is aromatic compound metabolism; 3-phenylpropanoate degradation. Part of the multicomponent 3-phenylpropionate dioxygenase, that converts 3-phenylpropionic acid (PP) and cinnamic acid (CI) into 3-phenylpropionate-dihydrodiol (PP-dihydrodiol) and cinnamic acid-dihydrodiol (CI-dihydrodiol), respectively. This Escherichia coli (strain SMS-3-5 / SECEC) protein is 3-phenylpropionate/cinnamic acid dioxygenase ferredoxin--NAD(+) reductase component.